A 405-amino-acid chain; its full sequence is Prenyltransferase phqA (405 aa).

Dimethylallyl diphosphate is bound by residues Tyr195, Lys262, and Gln332.

The protein belongs to the tryptophan dimethylallyltransferase family.

It participates in alkaloid biosynthesis. Functionally, prenyltransferase; part of the gene cluster that mediates the biosynthesis of paraherquamide, a fungal indole alkaloid that belongs to a family of natural products containing a characteristic bicyclo[2.2.2]diazaoctane core. The first steps in the biosynthesis of paraherquamide is the production of the beta-methyl-proline precursor from L-isoleucine. They require oxidation of a terminally hydroxylated L-isoleucine to the corresponding aldehyde by enzymes which have still to be identified. Spontaneous cyclization and dehydration would yield the 4-methyl pyrolline-5-carboxylic acid, which is then reduced by the pyrroline-5-carboxylate reductase phqD leading to the beta-methyl-proline precursor. The next step of paraherquamide biosynthesis involves coupling of beta-methyl-proline and L-tryptophan by the bimodular NRPS phqB, to produce a monooxopiperazine intermediate. The reductase (R) domain of phqB utilizes NADPH for hydride transfer to reduce the thioester bond of the T domain-tethered linear dipeptide to a hemithioaminal intermediate, which spontaneously cleaves the C-S bond to release the aldehyde product. This compound undergoes spontaneous cyclization and dehydration to give a dienamine which is reverse prenylated at C-2 by the reverse prenyltransferase phqJ. The other prenyltransferase present in the cluster, phqI may be a redundant gene in the pathway. During biosynthetic assembly, the key step to produce the polycyclic core is catalyzed by the bifunctional reductase and intramolecular [4+2] Diels-Alderase, phqE, resulting in formation of the [2.2.2] diazaoctane intermediate preparaherquamide. Following formation of preparaherquamide, an indole 2,3-epoxidation-initiated pinacol-like rearrangement is catalyzed by the phqK FAD-dependent monooxygenase. The prenyltransferase phqA, the cytochrome P450 monooxygenase phqL, and the FAD-linked oxidoreductase phqH (or the cytochrome P450 monooxygenase phqM), are proposed to be involved in the formation of the pyran ring. The FAD-dependent monooxygenase phqK is likely responsible for generation of the spiro-oxindole, and the N-methylation is likely mediated by the phqN methyltransferase leading to the isolable natural product paraherquamide F. However, the order of these biosynthetic steps has still to be determined. In late-stage paraherquamide biosynthesis, the third P450 monooxygenase, phqO, is probably responsible for the C-14 hydroxylation, transforming paraherquamide F to paraherquamide G, and paraherquamide E to the final product paraherquamide A. The expansion from the 6-membered ring pyran (in paraherquamides F and G) to the 7-membered dioxepin ring (in paraherquamides A and E) represents a poorly understood but intriguing process that probably involves the 2-oxoglutarate-dependent dioxygenase phqC. Finally, the remaining members of the paraherquamide cluster, including phqI as well as phqM (or phqH), do not have a clearly prescribed role and appear to be redundant. The sequence is that of Prenyltransferase phqA from Penicillium fellutanum.